The primary structure comprises 277 residues: Undecaprenyl-diphosphatase (277 aa).

A run of 6 helical transmembrane segments spans residues 47 to 67 (FNII…RGKI), 85 to 105 (ANLL…ADLI), 108 to 128 (WLFN…VMLW), 187 to 207 (FSFF…GYVY), 218 to 238 (VFAV…RALL), and 249 to 269 (FAWY…FHLI).

This sequence belongs to the UppP family.

The protein localises to the cell inner membrane. The enzyme catalyses di-trans,octa-cis-undecaprenyl diphosphate + H2O = di-trans,octa-cis-undecaprenyl phosphate + phosphate + H(+). In terms of biological role, catalyzes the dephosphorylation of undecaprenyl diphosphate (UPP). Confers resistance to bacitracin. This Pseudomonas aeruginosa (strain ATCC 15692 / DSM 22644 / CIP 104116 / JCM 14847 / LMG 12228 / 1C / PRS 101 / PAO1) protein is Undecaprenyl-diphosphatase.